The primary structure comprises 631 residues: Probable potassium transport system protein Kup (631 aa).

A run of 12 helical transmembrane segments spans residues 17–37 (IGLL…SPLY), 56–76 (ILGV…FKYM), 109–129 (MMMV…SMIT), 147–167 (GLDH…FLIQ), 174–194 (IGVL…ALGV), 215–235 (FFII…LALT), 256–276 (WFIL…ALVL), 288–308 (LLAP…ATII), 346–366 (IYIG…VIGF), 378–398 (VAVT…MLML), 403–423 (PLLA…FFAA), and 428–448 (IFQG…LMTT).

Belongs to the HAK/KUP transporter (TC 2.A.72) family.

It is found in the cell inner membrane. The enzyme catalyses K(+)(in) + H(+)(in) = K(+)(out) + H(+)(out). In terms of biological role, transport of potassium into the cell. Likely operates as a K(+):H(+) symporter. The chain is Probable potassium transport system protein Kup from Pseudomonas savastanoi pv. phaseolicola (strain 1448A / Race 6) (Pseudomonas syringae pv. phaseolicola (strain 1448A / Race 6)).